The chain runs to 348 residues: Lipoyl synthase (348 aa).

[4Fe-4S] cluster contacts are provided by Cys-55, Cys-60, Cys-66, Cys-81, Cys-85, Cys-88, and Ser-292. In terms of domain architecture, Radical SAM core spans Trp-67–Ala-281.

This sequence belongs to the radical SAM superfamily. Lipoyl synthase family. [4Fe-4S] cluster serves as cofactor.

The protein localises to the cytoplasm. The catalysed reaction is [[Fe-S] cluster scaffold protein carrying a second [4Fe-4S](2+) cluster] + N(6)-octanoyl-L-lysyl-[protein] + 2 oxidized [2Fe-2S]-[ferredoxin] + 2 S-adenosyl-L-methionine + 4 H(+) = [[Fe-S] cluster scaffold protein] + N(6)-[(R)-dihydrolipoyl]-L-lysyl-[protein] + 4 Fe(3+) + 2 hydrogen sulfide + 2 5'-deoxyadenosine + 2 L-methionine + 2 reduced [2Fe-2S]-[ferredoxin]. It functions in the pathway protein modification; protein lipoylation via endogenous pathway; protein N(6)-(lipoyl)lysine from octanoyl-[acyl-carrier-protein]: step 2/2. In terms of biological role, catalyzes the radical-mediated insertion of two sulfur atoms into the C-6 and C-8 positions of the octanoyl moiety bound to the lipoyl domains of lipoate-dependent enzymes, thereby converting the octanoylated domains into lipoylated derivatives. The sequence is that of Lipoyl synthase from Corynebacterium glutamicum (strain R).